We begin with the raw amino-acid sequence, 370 residues long: Protein maelstrom 2 (370 aa).

Positions 2–68 (AQNKPNAFMA…VLERESKTER (67 aa)) form a DNA-binding region, HMG box.

It belongs to the maelstrom family.

It is found in the cytoplasm. Its subcellular location is the nucleus. Involved both in the piRNA and miRNA metabolic processes. As a component of the meiotic nuage, plays a central role during oogenesis by repressing transposable elements and preventing their mobilization, which is essential for the germline integrity. Repression of transposable elements is mediated via the piRNA metabolic process, which mediates the repression of transposable elements during meiosis by forming complexes composed of piRNAs and Piwi proteins and governs the repression of transposons. As a nuclear component, it is required for proper differentiation in the germline stem cell (GSC) lineage by repressing microRNA-7 (miR-7), thereby acting as an indirect regulator of bag-of-marbles (Bam). Acts by binding to the promoter of miR-7 gene and repressing its expression; miR-7 repression alleviates the Bam repression by miR-7, thereby allowing differentiation in the germline stem cell (GSC) lineage. This is Protein maelstrom 2 (mael2) from Drosophila pseudoobscura pseudoobscura (Fruit fly).